The primary structure comprises 353 residues: Basic membrane protein C (353 aa).

The first 16 residues, Met1–Ala16, serve as a signal peptide directing secretion. Residue Cys17 is the site of N-palmitoyl cysteine attachment. Cys17 carries the S-diacylglycerol cysteine lipid modification.

The protein belongs to the BMP lipoprotein family. As to quaternary structure, monomer.

It localises to the cell inner membrane. Its function is as follows. May be part of an ABC-type nucleoside uptake system involved in the purine salvage pathway. The protein is Basic membrane protein C (bmpC) of Borreliella burgdorferi (strain ATCC 35210 / DSM 4680 / CIP 102532 / B31) (Borrelia burgdorferi).